Here is a 296-residue protein sequence, read N- to C-terminus: Enoyl-CoA hydratase AFT3-1 (296 aa).

Positions 294–296 match the Peroxisomal targeting signal type 1 motif; the sequence is PKL.

It belongs to the enoyl-CoA hydratase/isomerase family.

Its subcellular location is the peroxisome. The catalysed reaction is a (3S)-3-hydroxyacyl-CoA = a (2E)-enoyl-CoA + H2O. The enzyme catalyses a 4-saturated-(3S)-3-hydroxyacyl-CoA = a (3E)-enoyl-CoA + H2O. Its pathway is mycotoxin biosynthesis. Functionally, enoyl-CoA hydratase; part of the gene clusters that mediate the biosynthesis of the host-selective toxins (HSTs) AF-toxins responsible for Alternaria black spot of strawberry disease by the strawberry pathotype. AF-toxin I and III are valine derivatives of 2,3-dyhydroxy-isovaleric acid and 2-hydroxy-isovaleric acid respectively, while AF II is an isoleucine derivative of 2-hydroxy-valeric acid. These derivatives are bound to a 9,10-epoxy-8-hydroxy-9-methyl-decatrienoic acid (EDA) moiety. On cellular level, AF-toxins affect plasma membrane of susceptible cells and cause a sudden increase in loss of K(+) after a few minutes of toxin treatment. The aldo-keto reductase AFTS1 catalyzes the conversion of 2-keto-isovaleric acid (2-KIV) to 2-hydroxy-isovaleric acid (2-HIV) by reduction of its ketone to an alcohol. The acyl-CoA ligase AFT1, the hydrolase AFT2 and the enoyl-CoA hydratases AFT3 and AFT6, but also the polyketide synthase AFT9, the acyl-CoA dehydrogenase AFT10, the cytochrome P450 monooxygenase AFT11 and the oxidoreductase AFT12 are all involved in the biosynthesis of the AK-, AF- and ACT-toxin common EDA structural moiety. The exact function of each enzyme, and of additional enzymes identified within the AF-toxin clusters have still to be determined. This Alternaria alternata (Alternaria rot fungus) protein is Enoyl-CoA hydratase AFT3-1 (AFT3-1).